Here is a 201-residue protein sequence, read N- to C-terminus: MEKFTKLTGVAAPLPVVNIDTDMIIPKDYLKTIKRTGLGTGLFAEARYHQDGSINQDFVLNKPAYQNAKILVAGDNFGCGSSREHAPWALLDFGIRCVISTSFADIFYNNCFKNGILPIVVSQENLEKLMDDAQRGSNAVVTVDLETQEITGPDGGSISFEIDEFKRHCMLNGLDDIGLTMEKSSAIASFETANAASRPWA.

The protein belongs to the LeuD family. LeuD type 1 subfamily. As to quaternary structure, heterodimer of LeuC and LeuD.

It carries out the reaction (2R,3S)-3-isopropylmalate = (2S)-2-isopropylmalate. Its pathway is amino-acid biosynthesis; L-leucine biosynthesis; L-leucine from 3-methyl-2-oxobutanoate: step 2/4. In terms of biological role, catalyzes the isomerization between 2-isopropylmalate and 3-isopropylmalate, via the formation of 2-isopropylmaleate. The chain is 3-isopropylmalate dehydratase small subunit from Allorhizobium ampelinum (strain ATCC BAA-846 / DSM 112012 / S4) (Agrobacterium vitis (strain S4)).